The sequence spans 337 residues: Cell-surface associated glycoprotein DFI1 (337 aa).

Residues 1-21 are Cytoplasmic-facing; that stretch reads MEKLSINNNNNNRRYQSRRFD. Residues 22–42 traverse the membrane as a helical segment; it reads GITIIRIVVLVFIVTVSTYFV. Residues 43 to 269 lie on the Extracellular side of the membrane; the sequence is NSYTCNQPHH…NGGGLSHTNR (227 aa). N-linked (GlcNAc...) asparagine glycans are attached at residues Asn53, Asn65, Asn87, and Asn100. Composition is skewed to low complexity over residues 124-220 and 241-259; these read SSTF…TSAS and SVIS…KNND. 2 disordered regions span residues 124–224 and 241–265; these read SSTF…QHVT and SVIS…GGLS. The chain crosses the membrane as a helical span at residues 270-290; it reads IVVGVVVGVGGSILIGLLAVL. The short motif at 273–277 is the Glycophorin A element; the sequence is GVVVG. Residues 291 to 337 are Cytoplasmic-facing; the sequence is FYLRKRNNRDYEGGWTFWRKNEKLGSDEFFNGELGVRDRNINQGSNF. The Calmodulin-binding motif lies at 301 to 314; that stretch reads YEGGWTFWRKNEKL.

Belongs to the MID2 like cell wall stress sensor family. Post-translationally, cross-linked to the carbohydrate polymers of the cell wall. In terms of processing, O-glycosylated by MNT1 and MNT2. Also N-glycosylated.

Its subcellular location is the cell membrane. It localises to the cell septum. The protein localises to the secreted. It is found in the cell wall. Cell-surface associated glycoprotein that acts as a plasma membrane receptor-type protein which senses the presence of matrix. Binds to calmodulin in response to environmental conditions and initiates a signaling cascade that activates CEK1, thus promoting invasive filamentation. Involved in the maintenance of the cell wall. This chain is Cell-surface associated glycoprotein DFI1, found in Candida albicans (strain SC5314 / ATCC MYA-2876) (Yeast).